Reading from the N-terminus, the 709-residue chain is Nucleobase-ascorbate transporter 11 (709 aa).

Disordered regions lie at residues 1 to 28 (MDSGSGFDPDTGNNKGNGSGGGNGYGER) and 58 to 167 (TGFV…SEDG). Residues 15 to 25 (KGNGSGGGNGY) show a composition bias toward gly residues. Residues 65–74 (SGETSTSTRT) show a composition bias toward polar residues. Composition is skewed to basic and acidic residues over residues 75 to 89 (KFGESSDFDLPKGRD), 108 to 132 (NRPEIEHVTGSEPVSREEEERRLNR), and 142 to 151 (EGGKINKDLE). 12 helical membrane passes run 196–216 (YLSLVGSLVFIPLVIVPAMDG), 222–242 (ASVISTMLLLTGVTTILHCYF), 246–266 (LPLVQGSSFVYLAPVLVVINS), 288–308 (IIVGSLFQCILGFSGLMSLLL), 310–330 (FINPVVVAPTVAAVGLAFFSY), 336–356 (GTCVEISVPLILLLLIFTLYL), 369–389 (IYAVPLSALLIWTYAFFLTVG), 454–474 (IIMIFVSLVASVDSVGTYHSA), 532–552 (LVIGAMFLIVLSFLGKLGAIL), 555–575 (IPQALAASVLCFIWALTVSLG), 590–610 (ITIVGVSLFLGLSIPAYFQQY), and 642–662 (FAMNAVLSLNMVVTFLLAFIL).

Belongs to the nucleobase:cation symporter-2 (NCS2) (TC 2.A.40) family. Expressed in leaf primordia and vasculature of pedicels, rosette leaves, sepals, carpels and siliques. Expressed in the root central cylinder.

It is found in the membrane. The protein is Nucleobase-ascorbate transporter 11 (NAT11) of Arabidopsis thaliana (Mouse-ear cress).